The primary structure comprises 371 residues: COP9 signalosome complex subunit 5 (371 aa).

The 138-residue stretch at 51 to 188 (VKISAVALIK…IGAFRTYPEG (138 aa)) folds into the MPN domain. 3 residues coordinate Zn(2+): H134, H136, and D147. The short motif at 134–147 (HSHPGYGCWLSGID) is the JAMM motif element. The segment covering 278-292 (NSSSKLKLKPTQPTT) has biased composition (low complexity). Disordered stretches follow at residues 278-333 (NSSS…SRIT) and 352-371 (TPLT…QGRY). Basic and acidic residues predominate over residues 293 to 313 (KGKETTEGSDKKLKKGEKEFS). Residues 323 to 333 (NKVTQESSRIT) are compositionally biased toward polar residues.

The protein belongs to the peptidase M67A family. CSN5 subfamily. In terms of assembly, component of the COP9 signalosome (CSN) complex.

Its subcellular location is the cytoplasm. It localises to the nucleus. In terms of biological role, catalytic Component of the COP9 signalosome (CSN) complex that acts as an regulator of the ubiquitin (Ubl) conjugation pathway by mediating the deneddylation of the cullin subunit of SCF-type E3 ubiquitin-protein ligase complexes. This is COP9 signalosome complex subunit 5 (RRI1) from Cryptococcus neoformans var. neoformans serotype D (strain B-3501A) (Filobasidiella neoformans).